Consider the following 256-residue polypeptide: Tryptophan synthase alpha chain (256 aa).

Catalysis depends on proton acceptor residues E44 and D55.

The protein belongs to the TrpA family. As to quaternary structure, tetramer of two alpha and two beta chains.

It catalyses the reaction (1S,2R)-1-C-(indol-3-yl)glycerol 3-phosphate + L-serine = D-glyceraldehyde 3-phosphate + L-tryptophan + H2O. It functions in the pathway amino-acid biosynthesis; L-tryptophan biosynthesis; L-tryptophan from chorismate: step 5/5. Functionally, the alpha subunit is responsible for the aldol cleavage of indoleglycerol phosphate to indole and glyceraldehyde 3-phosphate. The protein is Tryptophan synthase alpha chain of Coxiella burnetii (strain CbuK_Q154) (Coxiella burnetii (strain Q154)).